Reading from the N-terminus, the 137-residue chain is Putative nucleoside diphosphate kinase (137 aa).

Residues Phe45, Arg73, Thr79, Arg90, and Asn100 each contribute to the ATP site. The Pros-phosphohistidine intermediate role is filled by His103.

This sequence belongs to the NDK family. Mg(2+) serves as cofactor.

The enzyme catalyses a 2'-deoxyribonucleoside 5'-diphosphate + ATP = a 2'-deoxyribonucleoside 5'-triphosphate + ADP. It catalyses the reaction a ribonucleoside 5'-diphosphate + ATP = a ribonucleoside 5'-triphosphate + ADP. In terms of biological role, major role in the synthesis of nucleoside triphosphates other than ATP. The ATP gamma phosphate is transferred to the NDP beta phosphate via a ping-pong mechanism, using a phosphorylated active-site intermediate. The protein is Putative nucleoside diphosphate kinase (NME2P1) of Homo sapiens (Human).